Reading from the N-terminus, the 462-residue chain is Cleavage and polyadenylation specificity factor subunit 7 (462 aa).

2 disordered regions span residues 34 to 68 and 161 to 213; these read VLTA…NKTP and TRQN…PSVL. Residues 50–62 show a composition bias toward pro residues; that stretch reads EPPPPVRQEPAPK. An RRM domain is found at 82-162; the sequence is AAVYVGSFSW…EKVDVRPATR (81 aa). Residues 181–190 show a composition bias toward basic and acidic residues; it reads HSRDSSDSAD. Thr-194 is modified (phosphothreonine). The residue at position 196 (Ser-196) is a Phosphoserine. A Glycyl lysine isopeptide (Lys-Gly) (interchain with G-Cter in SUMO2) cross-link involves residue Lys-345. The segment at 400-462 is disordered; the sequence is SVGASGSSSR…HRDRERDRHH (63 aa). 2 positions are modified to phosphoserine: Ser-404 and Ser-414. Residues 409–460 form an arg/Ser-rich domain region; that stretch reads RKRHRSRERSPSRSRESSRRHRDLLHNEDRHDDYFQERNREHERHRDRERDR. Composition is skewed to basic and acidic residues over residues 416-425 and 432-462; these read ERSPSRSRES and LLHN…DRHH.

Belongs to the RRM CPSF6/7 family. Component of the cleavage factor Im (CFIm) complex which is a heterotetramer composed of two subunits of NUDT21/CPSF5 and two subunits of CPSF6 or CPSF7 or a heterodimer of CPSF6 and CPSF7. The cleavage factor Im (CFIm) complex associates with the CPSF and CSTF complexes to promote the assembly of the core mRNA 3'-processing machinery. Interacts with NUDT21/CPSF5. Interacts (via Arg/Ser-rich domain) with FIP1L1 (preferentially via unphosphorylated form and Arg/Glu/Asp-rich region); this interaction mediates, at least in part, the interaction between the CFIm and CPSF complexes and may be inhibited by CPSF7 hyper-phosphorylation. Post-translationally, phosphorylated. Asymmetrically dimethylated on arginine residues by PRMT1.

The protein resides in the nucleus. It localises to the cytoplasm. Component of the cleavage factor Im (CFIm) complex that functions as an activator of the pre-mRNA 3'-end cleavage and polyadenylation processing required for the maturation of pre-mRNA into functional mRNAs. CFIm contributes to the recruitment of multiprotein complexes on specific sequences on the pre-mRNA 3'-end, so called cleavage and polyadenylation signals (pA signals). Most pre-mRNAs contain multiple pA signals, resulting in alternative cleavage and polyadenylation (APA) producing mRNAs with variable 3'-end formation. The CFIm complex acts as a key regulator of cleavage and polyadenylation site choice during APA through its binding to 5'-UGUA-3' elements localized in the 3'-untranslated region (UTR) for a huge number of pre-mRNAs. CPSF7 activates directly the mRNA 3'-processing machinery. Binds to pA signals in RNA substrates. This chain is Cleavage and polyadenylation specificity factor subunit 7, found in Rattus norvegicus (Rat).